The following is a 107-amino-acid chain: HTH-type transcriptional regulator Rv2034 (107 aa).

The HTH arsR-type domain occupies 1–93; the sequence is MSTYRSPDRA…DLDRFWTRAL (93 aa). Residues 33 to 56 constitute a DNA-binding region (H-T-H motif); that stretch reads VGELARDLPVSRPAVSQHLKVLKT.

Homodimer.

DNA-binding ability is not susceptible to zinc, nickel, cobalt, cadmium, lead, copper and manganese ions. Involved in the regulation of lipid metabolism and hypoxic response. Positively regulates transcription of various genes, such as phoP, groEL2 and dosR. Negatively regulates its own transcription. Acts by binding to a specific palindromic sequence motif in promoter regions. This chain is HTH-type transcriptional regulator Rv2034, found in Mycobacterium tuberculosis (strain ATCC 25618 / H37Rv).